A 483-amino-acid chain; its full sequence is Regulatory protein ViaA (483 aa).

It belongs to the ViaA family. In terms of assembly, homodimer. Interacts with RavA.

The protein localises to the cytoplasm. Its function is as follows. Component of the RavA-ViaA chaperone complex, which may act on the membrane to optimize the function of some of the respiratory chains. ViaA stimulates the ATPase activity of RavA. The chain is Regulatory protein ViaA from Salmonella heidelberg (strain SL476).